Reading from the N-terminus, the 424-residue chain is Dihydrolipoyllysine-residue succinyltransferase component of 2-oxoglutarate dehydrogenase complex (424 aa).

Residues 1–76 enclose the Lipoyl-binding domain; the sequence is MPEVKVPELA…EVGQAIAVVG (76 aa). Lysine 42 bears the N6-lipoyllysine mark. Disordered regions lie at residues 76–138 and 155–204; these read GEGS…KYAR and VRKE…RKKT. Residues 91 to 105 are compositionally biased toward basic and acidic residues; the sequence is EAPKQETETSTDDKS. Over residues 122-131 the composition is skewed to polar residues; the sequence is DNNQRVNATP. One can recognise a Peripheral subunit-binding (PSBD) domain in the interval 128 to 164; that stretch reads NATPSARKYAREKGIDLSEIAAASNDVVRKEHVDQSQ. A compositionally biased stretch (low complexity) spans 162-176; sequence QSQTQTSTQQQAQPA. Catalysis depends on residues histidine 395 and aspartate 399.

It belongs to the 2-oxoacid dehydrogenase family. As to quaternary structure, forms a 24-polypeptide structural core with octahedral symmetry. Part of the 2-oxoglutarate dehydrogenase (OGDH) complex composed of E1 (2-oxoglutarate dehydrogenase), E2 (dihydrolipoamide succinyltransferase) and E3 (dihydrolipoamide dehydrogenase); the complex contains multiple copies of the three enzymatic components (E1, E2 and E3). Requires (R)-lipoate as cofactor.

The enzyme catalyses N(6)-[(R)-dihydrolipoyl]-L-lysyl-[protein] + succinyl-CoA = N(6)-[(R)-S(8)-succinyldihydrolipoyl]-L-lysyl-[protein] + CoA. It participates in amino-acid degradation; L-lysine degradation via saccharopine pathway; glutaryl-CoA from L-lysine: step 6/6. Functionally, E2 component of the 2-oxoglutarate dehydrogenase (OGDH) complex which catalyzes the second step in the conversion of 2-oxoglutarate to succinyl-CoA and CO(2). The chain is Dihydrolipoyllysine-residue succinyltransferase component of 2-oxoglutarate dehydrogenase complex (odhB) from Staphylococcus saprophyticus subsp. saprophyticus (strain ATCC 15305 / DSM 20229 / NCIMB 8711 / NCTC 7292 / S-41).